The sequence spans 266 residues: Hydroxyethylthiazole kinase (266 aa).

Met39 serves as a coordination point for substrate. The ATP site is built by Lys115 and Thr160. Gly187 serves as a coordination point for substrate.

This sequence belongs to the Thz kinase family. Mg(2+) is required as a cofactor.

It catalyses the reaction 5-(2-hydroxyethyl)-4-methylthiazole + ATP = 4-methyl-5-(2-phosphooxyethyl)-thiazole + ADP + H(+). It functions in the pathway cofactor biosynthesis; thiamine diphosphate biosynthesis; 4-methyl-5-(2-phosphoethyl)-thiazole from 5-(2-hydroxyethyl)-4-methylthiazole: step 1/1. Its function is as follows. Catalyzes the phosphorylation of the hydroxyl group of 4-methyl-5-beta-hydroxyethylthiazole (THZ). The sequence is that of Hydroxyethylthiazole kinase from Staphylococcus aureus (strain MSSA476).